Here is a 451-residue protein sequence, read N- to C-terminus: MGRRYFGTDGIRGTVGEGPITPDFVLRLGYAAGKVLASSAEVAAGSRPTVLIGKDTRVSGYMLEAALEAGFSAAGVDVMLAGPMPTPGVAYLTRALRLSAGVVISASHNPYHDNGIKFFSADGNKLPDDTEAAIEAWLDKPLECASSDGLGKARRLDDAAGRYIEFCKSTFPAAFNLRGLKLVIDCAHGAAYQIAPHVFHELGADVIPIGVAPNGFNINDGVGATAPDALVRAVRANHADLGIALDGDADRLQVVDSTGRLYNGDELLYVLVKDRIATDGKVEGAVGTLMTNLAVEVALQREGVKFVRAAVGDRYVLEQLREHGWQLGAEGSGHILSLDRHSTGDGIVSALLVLAALKRSGQTLAQMLDGVTLFPQKLINVRMKPGADWKGSTSIRAAIDTAEAALAGSGRVLIRASGTEPVLRVMVEAQQAADAVRHAETIADAVRAATT.

Residue S107 is the Phosphoserine intermediate of the active site. Mg(2+) contacts are provided by S107, D246, D248, and D250. At S107 the chain carries Phosphoserine.

It belongs to the phosphohexose mutase family. Mg(2+) is required as a cofactor. Post-translationally, activated by phosphorylation.

It carries out the reaction alpha-D-glucosamine 1-phosphate = D-glucosamine 6-phosphate. Functionally, catalyzes the conversion of glucosamine-6-phosphate to glucosamine-1-phosphate. The chain is Phosphoglucosamine mutase from Burkholderia lata (strain ATCC 17760 / DSM 23089 / LMG 22485 / NCIMB 9086 / R18194 / 383).